Here is a 231-residue protein sequence, read N- to C-terminus: Small ribosomal subunit protein uS3c (231 aa).

The 85-residue stretch at 39 to 123 folds into the KH type-2 domain; sequence LRNFIKKKYI…HLRLSVKPLR (85 aa).

This sequence belongs to the universal ribosomal protein uS3 family. As to quaternary structure, part of the 30S ribosomal subunit.

The protein localises to the plastid. The protein resides in the chloroplast. The polypeptide is Small ribosomal subunit protein uS3c (rps3) (Chlorella vulgaris (Green alga)).